A 250-amino-acid polypeptide reads, in one-letter code: Triosephosphate isomerase (250 aa).

N9–K11 lines the substrate pocket. The Electrophile role is filled by H95. The Proton acceptor role is filled by E167. Residues G173, S212, and G233–G234 contribute to the substrate site.

This sequence belongs to the triosephosphate isomerase family. Homodimer.

The protein resides in the cytoplasm. The enzyme catalyses D-glyceraldehyde 3-phosphate = dihydroxyacetone phosphate. It participates in carbohydrate biosynthesis; gluconeogenesis. The protein operates within carbohydrate degradation; glycolysis; D-glyceraldehyde 3-phosphate from glycerone phosphate: step 1/1. In terms of biological role, involved in the gluconeogenesis. Catalyzes stereospecifically the conversion of dihydroxyacetone phosphate (DHAP) to D-glyceraldehyde-3-phosphate (G3P). The protein is Triosephosphate isomerase of Nitrosococcus oceani (strain ATCC 19707 / BCRC 17464 / JCM 30415 / NCIMB 11848 / C-107).